The chain runs to 330 residues: Tyrosine-protein phosphatase yvh1 (330 aa).

Positions 45 to 187 constitute a Tyrosine-protein phosphatase domain; it reads NDLSEISKNL…LRVYFECNYQ (143 aa). The active-site Phosphocysteine intermediate is the Cys131.

The protein belongs to the protein-tyrosine phosphatase family. Non-receptor class dual specificity subfamily.

Its subcellular location is the cytoplasm. The protein resides in the nucleus. The enzyme catalyses O-phospho-L-tyrosyl-[protein] + H2O = L-tyrosyl-[protein] + phosphate. Its function is as follows. May be directly involved in signal transduction and/or cell cycle regulation. It is necessary for maintaining growth rate or spore germination. Could show both activity toward tyrosine-protein phosphate as well as with serine-protein phosphate. This is Tyrosine-protein phosphatase yvh1 (yvh1) from Schizosaccharomyces pombe (strain 972 / ATCC 24843) (Fission yeast).